Here is a 420-residue protein sequence, read N- to C-terminus: Glycogen synthase kinase-3 beta (420 aa).

Over residues 1–22 (MSGRPRTTSFAESCKPVQQPSA) the composition is skewed to polar residues. Residues 1–53 (MSGRPRTTSFAESCKPVQQPSAFGSMKVSRDKDGSKVTTVVATPGQGPDRPQE) are disordered. At serine 9 the chain carries Phosphoserine; by PKB/AKT1, RPS6KA3 and SGK3. Cysteine 14 is lipidated: S-palmitoyl cysteine. Positions 56–340 (YTDTKVIGNG…PLEACAHSFF (285 aa)) constitute a Protein kinase domain. ATP is bound by residues 62-70 (IGNGSFGVV) and lysine 85. Residue aspartate 181 is the Proton acceptor of the active site. Position 216 is a phosphotyrosine (tyrosine 216). Residues 385–420 (QAAASPPANATAASDTNAGDRGQTNNAASASASNST) are disordered. Low complexity-rich tracts occupy residues 386-401 (AAAS…SDTN) and 409-420 (NNAASASASNST). Serine 389 carries the phosphoserine modification.

This sequence belongs to the protein kinase superfamily. CMGC Ser/Thr protein kinase family. GSK-3 subfamily. Monomer. Interacts with DAB2IP (via C2 domain); the interaction stimulates GSK3B kinase activation. Interacts (via C2 domain) with PPP2CA. Interacts with ARRB2, AXIN1, CABYR, DISC1, MMP2, MUC1, NIN, PRUNE1 and ZBED3. Interacts with AXIN1; the interaction mediates hyperphosphorylation of CTNNB1 leading to its ubiquitination and destruction. Interacts with and phosphorylates SNAI1. Interacts with DNM1L (via a C-terminal domain). Found in a complex composed of MACF1, APC, AXIN1, CTNNB1 and GSK3B. Interacts with SGK3. Interacts with the CLOCK-BMAL1 heterodimer. Interacts with the BMAL1. Interacts with CTNND2. The complex composed, at least, of APC, CTNNB1 and GSK3B interacts with JPT1; the interaction requires the inactive form of GSK3B (phosphorylated at 'Ser-9'). Forms a complex composed of PRKAR2A or PRKAR2B, GSK3B and GSKIP through GSKIP interaction; facilitates PKA-induced phosphorylation and regulates GSK3B activity. Interacts with GSKIP. Interacts with GID8. Interacts with PIWIL2. Interacts with LMBR1L. Interacts with DDX3X. Interacts with BIRC2. Interacts with TNFRSF10B; TNFRSF10B stimulation inhibits GSK3B kinase activity. Found in a complex with SLC39A6, SLC39A10 and with GSK3B that controls NCAM1 phosphorylation. Interacts with PKP3 (via ARM repeats); the interaction may be involved in PKP3 protein degradation. Phosphorylated by AKT1 and ILK1. Upon insulin-mediated signaling, the activated PKB/AKT1 and RPS6KA3 protein kinases phosphorylate and deactivate GSK3B, resulting in the dephosphorylation and activation of GYS1. Activated by phosphorylation at Tyr-216. Inactivated by phosphorylation at Ser-9. Phosphorylated in a circadian manner in the hippocampus. Post-translationally, mono-ADP-ribosylation by PARP10 negatively regulates kinase activity. In terms of processing, palmitoylated. Palmitoylation by ZDHHC4 prevents AKT1-mediated phosphorylation.

It is found in the cytoplasm. Its subcellular location is the nucleus. The protein localises to the membrane. The protein resides in the cell membrane. The catalysed reaction is L-seryl-[tau protein] + ATP = O-phospho-L-seryl-[tau protein] + ADP + H(+). It catalyses the reaction L-threonyl-[tau protein] + ATP = O-phospho-L-threonyl-[tau protein] + ADP + H(+). The enzyme catalyses L-seryl-[protein] + ATP = O-phospho-L-seryl-[protein] + ADP + H(+). It carries out the reaction L-threonyl-[protein] + ATP = O-phospho-L-threonyl-[protein] + ADP + H(+). With respect to regulation, activated by phosphorylation at Tyr-216. In response to insulin, inhibited by phosphorylation at Ser-9 by PKB/AKT1; phosphorylation at this site causes a conformational change, preventing access of substrates to the active site. Inhibited by IL22 treatment which also triggers phosphorylation at Ser-9, promoting inactivation. Inhibited by lithium. Functionally, constitutively active protein kinase that acts as a negative regulator in the hormonal control of glucose homeostasis, Wnt signaling and regulation of transcription factors and microtubules, by phosphorylating and inactivating glycogen synthase (GYS1 or GYS2), EIF2B, CTNNB1/beta-catenin, APC, AXIN1, DPYSL2/CRMP2, JUN, NFATC1/NFATC, MAPT/TAU and MACF1. Requires primed phosphorylation of the majority of its substrates. In skeletal muscle, contributes to insulin regulation of glycogen synthesis by phosphorylating and inhibiting GYS1 activity and hence glycogen synthesis. May also mediate the development of insulin resistance by regulating activation of transcription factors. Regulates protein synthesis by controlling the activity of initiation factor 2B (EIF2BE/EIF2B5) in the same manner as glycogen synthase. In Wnt signaling, GSK3B forms a multimeric complex with APC, AXIN1 and CTNNB1/beta-catenin and phosphorylates the N-terminus of CTNNB1 leading to its degradation mediated by ubiquitin/proteasomes. Phosphorylates JUN at sites proximal to its DNA-binding domain, thereby reducing its affinity for DNA. Phosphorylates NFATC1/NFATC on conserved serine residues promoting NFATC1/NFATC nuclear export, shutting off NFATC1/NFATC gene regulation, and thereby opposing the action of calcineurin. Phosphorylates MAPT/TAU on 'Thr-548', decreasing significantly MAPT/TAU ability to bind and stabilize microtubules. MAPT/TAU is the principal component of neurofibrillary tangles in Alzheimer disease. Plays an important role in ERBB2-dependent stabilization of microtubules at the cell cortex. Phosphorylates MACF1, inhibiting its binding to microtubules which is critical for its role in bulge stem cell migration and skin wound repair. Probably regulates NF-kappa-B (NFKB1) at the transcriptional level and is required for the NF-kappa-B-mediated anti-apoptotic response to TNF-alpha (TNF/TNFA). Negatively regulates replication in pancreatic beta-cells, resulting in apoptosis, loss of beta-cells and diabetes. Through phosphorylation of the anti-apoptotic protein MCL1, may control cell apoptosis in response to growth factors deprivation. Phosphorylates MUC1 in breast cancer cells, decreasing the interaction of MUC1 with CTNNB1/beta-catenin. Is necessary for the establishment of neuronal polarity and axon outgrowth. Phosphorylates MARK2, leading to inhibition of its activity. Phosphorylates SIK1 at 'Thr-182', leading to sustainment of its activity. Phosphorylates ZC3HAV1 which enhances its antiviral activity. Phosphorylates SNAI1, leading to its ubiquitination and proteasomal degradation. Phosphorylates SFPQ at 'Thr-687' upon T-cell activation. Phosphorylates NR1D1 st 'Ser-55' and 'Ser-59' and stabilizes it by protecting it from proteasomal degradation. Regulates the circadian clock via phosphorylation of the major clock components including BMAL1, CLOCK and PER2. Phosphorylates CLOCK AT 'Ser-427' and targets it for proteasomal degradation. Phosphorylates BMAL1 at 'Ser-17' and 'Ser-21' and primes it for ubiquitination and proteasomal degradation. Phosphorylates FBXL2 at 'Thr-404' and primes it for ubiquitination by the SCF(FBXO3) complex and proteasomal degradation. Phosphorylates OGT at 'Ser-3' or 'Ser-4' which positively regulates its activity. Phosphorylates MYCN in neuroblastoma cells which may promote its degradation. Regulates the circadian rhythmicity of hippocampal long-term potentiation and BMAL1 and PER2 expression. Acts as a regulator of autophagy by mediating phosphorylation of KAT5/TIP60 under starvation conditions, activating KAT5/TIP60 acetyltransferase activity and promoting acetylation of key autophagy regulators, such as ULK1 and RUBCNL/Pacer. Negatively regulates extrinsic apoptotic signaling pathway via death domain receptors. Promotes the formation of an anti-apoptotic complex, made of DDX3X, BRIC2 and GSK3B, at death receptors, including TNFRSF10B. The anti-apoptotic function is most effective with weak apoptotic signals and can be overcome by stronger stimulation. Phosphorylates E2F1, promoting the interaction between E2F1 and USP11, stabilizing E2F1 and promoting its activity. Phosphorylates mTORC2 complex component RICTOR at 'Ser-1235' in response to endoplasmic stress, inhibiting mTORC2. Phosphorylates FXR1, promoting FXR1 ubiquitination by the SCF(FBXO4) complex and FXR1 degradation by the proteasome. Phosphorylates interleukin-22 receptor subunit IL22RA1, preventing its proteasomal degradation. The chain is Glycogen synthase kinase-3 beta from Rattus norvegicus (Rat).